The primary structure comprises 434 residues: Histidinol dehydrogenase (434 aa).

Positions 130, 188, and 211 each coordinate NAD(+). 3 residues coordinate substrate: Ser237, Gln259, and His262. 2 residues coordinate Zn(2+): Gln259 and His262. Catalysis depends on proton acceptor residues Glu326 and His327. 4 residues coordinate substrate: His327, Asp360, Glu414, and His419. Asp360 contributes to the Zn(2+) binding site. Position 419 (His419) interacts with Zn(2+).

It belongs to the histidinol dehydrogenase family. In terms of assembly, homodimer. It depends on Zn(2+) as a cofactor.

The catalysed reaction is L-histidinol + 2 NAD(+) + H2O = L-histidine + 2 NADH + 3 H(+). It functions in the pathway amino-acid biosynthesis; L-histidine biosynthesis; L-histidine from 5-phospho-alpha-D-ribose 1-diphosphate: step 9/9. Functionally, catalyzes the sequential NAD-dependent oxidations of L-histidinol to L-histidinaldehyde and then to L-histidine. This is Histidinol dehydrogenase from Escherichia coli (strain K12).